Consider the following 313-residue polypeptide: MASPQHPGGPGWTGPRNQCITRTRQEVLPPGPDLPCPGPEEAQDGPTSNSNMTTRELQEHWQKEKSRWKHVRLLFEIASARIEERKVSKFVMYQVVVIQTGSFDSDKAVVERRYSDFERLQRALLKRFGPELEDVTFPRKRLTGNLSAETICERRLELREYLRLLYAVRAVRRSREFADFLTRPELCEAFGCLRAGQYARALDLLGRVVPLQEKLTAHCPSAPVPALCAMLVCLRDLERPAEAFAVGERALRRLGARESHRYYAPLLDAMVRLAYALGKDLASLQGRLDESQLRRPTHRGATLKELTVREYLS.

The disordered stretch occupies residues 1–61 (MASPQHPGGP…MTTRELQEHW (61 aa)). Ser3 is subject to Phosphoserine. The span at 29-38 (PPGPDLPCPG) shows a compositional bias: pro residues. Over residues 45-55 (GPTSNSNMTTR) the composition is skewed to polar residues. In terms of domain architecture, PX spans 71-188 (VRLLFEIASA…DFLTRPELCE (118 aa)). Residues Arg113, Ser115, Lys140, and Arg154 each contribute to the a 1,2-diacyl-sn-glycero-3-phospho-(1D-myo-inositol-3-phosphate) site.

Belongs to the sorting nexin family. In terms of assembly, interacts with SELPLG. Interaction with SELPLG is controversial.

The protein localises to the early endosome membrane. The protein resides in the cell membrane. Its subcellular location is the cytoplasm. It is found in the nucleus. Functionally, may play a role in cellular vesicle trafficking. Has been proposed to function as a sorting protein that targets SELPLG into endosomes, but has no effect on SELPLG internalization from the cell surface, or on SELPLG-mediated cell-cell adhesion. The chain is Sorting nexin-20 (Snx20) from Rattus norvegicus (Rat).